A 340-amino-acid polypeptide reads, in one-letter code: NAC domain-containing protein 89 (340 aa).

One can recognise an NAC domain in the interval Val21 to Asn164. The DNA-binding element occupies Ile119–Gly170. Positions Tyr167–Ser181 are enriched in polar residues. Residues Tyr167–Pro198 are disordered.

As to quaternary structure, interacts with PAS1.

It localises to the cytoplasm. Its subcellular location is the nucleus. Functionally, transcription factor involved in plant cell division. The sequence is that of NAC domain-containing protein 89 (NAC089) from Arabidopsis thaliana (Mouse-ear cress).